A 483-amino-acid chain; its full sequence is V-type proton ATPase subunit H (483 aa).

Phosphoserine is present on residues Ser-59 and Ser-483.

Belongs to the V-ATPase H subunit family. In terms of assembly, V-ATPase is a heteromultimeric enzyme made up of two complexes: the ATP-hydrolytic V1 complex and the proton translocation V0 complex. The V1 complex consists of three catalytic AB heterodimers that form a heterohexamer, three peripheral stalks each consisting of EG heterodimers, one central rotor including subunits D and F, and the regulatory subunits C and H. The proton translocation complex V0 consists of the proton transport subunit a, a ring of proteolipid subunits c9c'', rotary subunit d, subunits e and f, and the accessory subunits ATP6AP1/Ac45 and ATP6AP2/PRR. Interacts with AP2M1.

It localises to the cytoplasmic vesicle. Its subcellular location is the clathrin-coated vesicle membrane. Its function is as follows. Subunit of the V1 complex of vacuolar(H+)-ATPase (V-ATPase), a multisubunit enzyme composed of a peripheral complex (V1) that hydrolyzes ATP and a membrane integral complex (V0) that translocates protons. V-ATPase is responsible for acidifying and maintaining the pH of intracellular compartments and in some cell types, is targeted to the plasma membrane, where it is responsible for acidifying the extracellular environment. Subunit H is essential for V-ATPase activity, but not for the assembly of the complex. Involved in the endocytosis mediated by clathrin-coated pits, required for the formation of endosomes. The polypeptide is V-type proton ATPase subunit H (Atp6v1h) (Mus musculus (Mouse)).